A 316-amino-acid polypeptide reads, in one-letter code: Nod factor export ATP-binding protein I (316 aa).

The ABC transporter domain maps to 18–248 (IDFSDVSKTY…LIGCEVIEIY (231 aa)). Position 50-57 (50-57 (GPNGAGKS)) interacts with ATP.

This sequence belongs to the ABC transporter superfamily. Lipooligosaccharide exporter (TC 3.A.1.102) family. The complex is composed of two ATP-binding proteins (NodI) and two transmembrane proteins (NodJ).

Its subcellular location is the cell inner membrane. Functionally, part of the ABC transporter complex NodIJ involved in the export of the nodulation factors (Nod factors), the bacterial signal molecules that induce symbiosis and subsequent nodulation induction. Nod factors are LCO (lipo-chitin oligosaccharide), a modified beta-1,4-linked N-acetylglucosamine oligosaccharide. This subunit is responsible for energy coupling to the transport system. This Rhizobium etli (strain ATCC 51251 / DSM 11541 / JCM 21823 / NBRC 15573 / CFN 42) protein is Nod factor export ATP-binding protein I.